The chain runs to 446 residues: Hepatocyte nuclear factor 4-beta (446 aa).

The nuclear receptor DNA-binding region spans 47 to 122 (NSFCAICGDR…AGMKKEAVQN (76 aa)). NR C4-type zinc fingers lie at residues 50–70 (CAICGDRATGKHYGASSCDGC) and 86–110 (CRFSRQCIVDKDKRNQCRYCRLRKC). The NR LBD domain occupies 137 to 366 (NGSLSINVLT…SLLQELLLGG (230 aa)).

This sequence belongs to the nuclear hormone receptor family. NR2 subfamily. As to quaternary structure, homodimerization is required for HNF4-alpha to bind to its recognition site. In terms of tissue distribution, expressed in liver, kidney, stomach, intestine, lung, ovary, and testis. Not expressed in fat, muscle and brain.

It is found in the nucleus. Transcription factor; binds and activates the promoter for the HNF1-alpha gene. Seems to have a lower DNA binding activity than HNF4-alpha and is a weaker transactivator than the alpha isoform. The chain is Hepatocyte nuclear factor 4-beta (hnf4b) from Xenopus laevis (African clawed frog).